The chain runs to 72 residues: Large ribosomal subunit protein bL31 (72 aa).

4 residues coordinate Zn(2+): cysteine 16, cysteine 18, cysteine 37, and cysteine 40.

The protein belongs to the bacterial ribosomal protein bL31 family. Type A subfamily. In terms of assembly, part of the 50S ribosomal subunit. The cofactor is Zn(2+).

In terms of biological role, binds the 23S rRNA. This chain is Large ribosomal subunit protein bL31, found in Buchnera aphidicola subsp. Acyrthosiphon pisum (strain APS) (Acyrthosiphon pisum symbiotic bacterium).